The following is a 487-amino-acid chain: ATP synthase subunit beta 1 (487 aa).

162 to 169 is an ATP binding site; the sequence is GGAGVGKT.

This sequence belongs to the ATPase alpha/beta chains family. As to quaternary structure, F-type ATPases have 2 components, CF(1) - the catalytic core - and CF(0) - the membrane proton channel. CF(1) has five subunits: alpha(3), beta(3), gamma(1), delta(1), epsilon(1). CF(0) has three main subunits: a(1), b(2) and c(9-12). The alpha and beta chains form an alternating ring which encloses part of the gamma chain. CF(1) is attached to CF(0) by a central stalk formed by the gamma and epsilon chains, while a peripheral stalk is formed by the delta and b chains.

It localises to the cell inner membrane. The enzyme catalyses ATP + H2O + 4 H(+)(in) = ADP + phosphate + 5 H(+)(out). In terms of biological role, produces ATP from ADP in the presence of a proton gradient across the membrane. The catalytic sites are hosted primarily by the beta subunits. The sequence is that of ATP synthase subunit beta 1 from Gluconobacter oxydans (strain 621H) (Gluconobacter suboxydans).